A 226-amino-acid polypeptide reads, in one-letter code: Respiratory nitrate reductase 2 gamma chain (226 aa).

The Periplasmic segment spans residues 1 to 4 (MIQY). A helical transmembrane segment spans residues 5–30 (LNVFFYDIYPYICATVFFLGSWLRYD). At 31-48 (YGQYTWRASSSQMLDKRG) the chain is on the cytoplasmic side. Residues 49–71 (MVIWSNLFHIGILGIFFGHLFGM) form a helical membrane-spanning segment. Residues H57 and H67 each coordinate heme b. Residues 72 to 83 (LTPHWMYAWFLP) are Periplasmic-facing. The chain crosses the membrane as a helical span at residues 84–113 (VAAKQLMAMVLGGICGVLTLIGGAGLLWRR). The Cytoplasmic segment spans residues 114–125 (LTNQRVRATSTT). A helical transmembrane segment spans residues 126–149 (PDIIIMSILLIQCLLGLSTIPFSA). At 150–183 (QYPDGSEMMKLVGWAQSIVTFRGGSSEMLNGVAF) the chain is on the periplasmic side. A helical membrane pass occupies residues 184–199 (VFRLHLVLGMTIFLLF). Heme b contacts are provided by H188 and H206. At 200–226 (PFTRLVHVWSAPFEYFTRRYQIVRSRR) the chain is on the cytoplasmic side.

As to quaternary structure, dimer of heterotrimers each composed of an alpha, a beta and a gamma chain. Alpha and beta are catalytic chains; gamma chains are involved in binding the enzyme complex to the cytoplasmic membrane. Heme is required as a cofactor.

Its subcellular location is the cell inner membrane. It carries out the reaction nitrate + a quinol = a quinone + nitrite + H2O. Its function is as follows. This is a second nitrate reductase enzyme which can substitute for the NRA enzyme and allows E.coli to use nitrate as an electron acceptor during anaerobic growth. The gamma chain is a membrane-embedded heme-iron unit resembling cytochrome b, which transfers electrons from quinones to the beta subunit. The polypeptide is Respiratory nitrate reductase 2 gamma chain (narV) (Escherichia coli (strain K12)).